The chain runs to 101 residues: Ubiquitin-related modifier 1 (101 aa).

G101 carries the post-translational modification 1-thioglycine. G101 is covalently cross-linked (Glycyl lysine isopeptide (Gly-Lys) (interchain with K-? in acceptor proteins)).

It belongs to the URM1 family. In terms of processing, C-terminal thiocarboxylation occurs in 2 steps, it is first acyl-adenylated (-COAMP) via the hesA/moeB/thiF part of UBA4, then thiocarboxylated (-COSH) via the rhodanese domain of UBA4.

Its subcellular location is the cytoplasm. It functions in the pathway tRNA modification; 5-methoxycarbonylmethyl-2-thiouridine-tRNA biosynthesis. In terms of biological role, acts as a sulfur carrier required for 2-thiolation of mcm(5)S(2)U at tRNA wobble positions of cytosolic tRNA(Lys), tRNA(Glu) and tRNA(Gln). Serves as sulfur donor in tRNA 2-thiolation reaction by being thiocarboxylated (-COSH) at its C-terminus by the MOCS3 homolog UBA4. The sulfur is then transferred to tRNA to form 2-thiolation of mcm(5)S(2)U. Prior mcm(5) tRNA modification by the elongator complex is required for 2-thiolation. Also acts as a ubiquitin-like protein (UBL) that is covalently conjugated via an isopeptide bond to lysine residues of target proteins such as AHP1. The thiocarboxylated form serves as substrate for conjugation and oxidative stress specifically induces the formation of UBL-protein conjugates. This chain is Ubiquitin-related modifier 1, found in Scheffersomyces stipitis (strain ATCC 58785 / CBS 6054 / NBRC 10063 / NRRL Y-11545) (Yeast).